A 355-amino-acid chain; its full sequence is uncharacterized protein (355 aa).

The signal sequence occupies residues 1–21 (MQKKVLFNDIVFVCFPITDNG). Residues N20, N78, N87, N156, N159, and N274 are each glycosylated (N-linked (GlcNAc...) asparagine; by host). The Virion surface portion of the chain corresponds to 22–331 (SIIISDIGYS…SSTSFFSRYG (310 aa)). The segment at 288 to 317 (GSKSTPNGPNGPTPTPSNGPNGPTPVPGIP) is disordered. Positions 296-317 (PNGPTPTPSNGPNGPTPVPGIP) are enriched in pro residues. A glycan (N-linked (GlcNAc...) asparagine; by host) is linked at N320. Residues 332-352 (LWIIIAIILLIVIISAVGIYF) form a helical membrane-spanning segment. Residues 353–355 (YLR) lie on the Intravirion side of the membrane.

It localises to the host membrane. The protein localises to the virion. This is an uncharacterized protein from Acanthamoeba polyphaga mimivirus (APMV).